The sequence spans 209 residues: 3-demethoxyubiquinol 3-hydroxylase (209 aa).

Glutamate 58, glutamate 88, histidine 91, glutamate 140, glutamate 172, and histidine 175 together coordinate Fe cation.

It belongs to the COQ7 family. It depends on Fe cation as a cofactor.

It is found in the cell membrane. The enzyme catalyses a 5-methoxy-2-methyl-3-(all-trans-polyprenyl)benzene-1,4-diol + AH2 + O2 = a 3-demethylubiquinol + A + H2O. It participates in cofactor biosynthesis; ubiquinone biosynthesis. In terms of biological role, catalyzes the hydroxylation of 2-nonaprenyl-3-methyl-6-methoxy-1,4-benzoquinol during ubiquinone biosynthesis. The chain is 3-demethoxyubiquinol 3-hydroxylase from Polynucleobacter asymbioticus (strain DSM 18221 / CIP 109841 / QLW-P1DMWA-1) (Polynucleobacter necessarius subsp. asymbioticus).